A 93-amino-acid polypeptide reads, in one-letter code: FMRFamide-like neuropeptides 22 (93 aa).

The first 19 residues, 1 to 19 (MNRSMIALCVVLMVSLVSA), serve as a signal peptide directing secretion. Positions 20–46 (QVFDLDGQQLAGLEQNDARLMEQQVKR) are excised as a propeptide. 3 positions are modified to phenylalanine amide: F55, F67, and F79. Positions 83–93 (SGAEAVSEQDY) are excised as a propeptide.

The protein belongs to the FARP (FMRFamide related peptide) family.

It localises to the secreted. Functionally, FMRFamides and FMRFamide-like peptides are neuropeptides. SPSAKWMRF-amide: Acts as a ligand for the npr-22 receptor in vitro. This is FMRFamide-like neuropeptides 22 from Caenorhabditis elegans.